Reading from the N-terminus, the 636-residue chain is ABC transporter ATP-binding protein RamA (636 aa).

Transmembrane regions (helical) follow at residues 45 to 65 (VLVLLCSVAAAVAAVAQPLAL), 78 to 98 (AGWWLPLSAALLLGELLLDSA), 175 to 195 (LVDVWVALCVLTGLPALALLL), 269 to 289 (GVLVPLLTLAATAVGGLRLAA), and 297 to 317 (LLAVGRYAQLTAGVGAAASLL). In terms of domain architecture, ABC transmembrane type-1 spans 45–322 (VLVLLCSVAA…AASLLGAIVR (278 aa)). The ABC transporter domain occupies 354-585 (LRLCGVRVLR…AGYREVFGAG (232 aa)). 386 to 393 (GRSGAGKS) contributes to the ATP binding site. The segment covering 589–606 (GAGAGAGAGADAGAGADA) has biased composition (gly residues). The disordered stretch occupies residues 589 to 636 (GAGAGAGAGADAGAGADAGPGPDSGAATAVGGSGPGPVRRPEPEEARP). Positions 607-618 (GPGPDSGAATAV) are enriched in low complexity. Residues 627-636 (RRPEPEEARP) show a composition bias toward basic and acidic residues.

The protein belongs to the ABC transporter superfamily.

It is found in the cell membrane. Its function is as follows. Probably involved in exporting SapB from the cell. Expression of the ram locus (ramA, ramB and ramR) induces rapid aerial mycelium formation in S.lividans. In Streptomyces coelicolor (strain ATCC BAA-471 / A3(2) / M145), this protein is ABC transporter ATP-binding protein RamA.